Consider the following 236-residue polypeptide: MASLDRVKVLVLGDSGVGKSSLVHLLCHNQVLGNPSWTVGCSVDIRVHDYKEGTPEEKTYYIELWDVGGSVGSASSVKSTRAVFYNSVNGIILVHDLTNKKSSQNLYRWSLEVLNRDAVPTGVLVTNGDYDREQFADNQIPLLVIGTKLDQIHETKRHEVLIRTAFLAEDFNAEEINLDCTNPRSSAAGSSNAVKLSRFFDKVIEKRYFFREGNQIPGFSDRKRFGGGALKNFHCD.

The small GTPase-like stretch occupies residues 1 to 235 (MASLDRVKVL…GGGALKNFHC (235 aa)). GTP contacts are provided by residues 16–21 (GVGKSS), 148–150 (KLD), and 179–180 (DC).

It belongs to the small GTPase superfamily. Rab family. Homodimer. Interacts with GPR89; the interaction stabilizes GPR89. Interacts with RAP1GDS1.

In terms of biological role, required for KRAS signaling regulation and modulation of cell proliferation. Regulator of KRAS prenylation, and probably prenylation of other small GTPases. Required for lymphocyte development and function. Not required for myeloid cell development. The chain is Rab-like protein 3 (Rabl3) from Mus musculus (Mouse).